The chain runs to 153 residues: Endoribonuclease YbeY (153 aa).

Zn(2+) is bound by residues histidine 114, histidine 118, and histidine 124.

Belongs to the endoribonuclease YbeY family. Zn(2+) is required as a cofactor.

It localises to the cytoplasm. Functionally, single strand-specific metallo-endoribonuclease involved in late-stage 70S ribosome quality control and in maturation of the 3' terminus of the 16S rRNA. In Shewanella baltica (strain OS223), this protein is Endoribonuclease YbeY.